Here is a 389-residue protein sequence, read N- to C-terminus: Inactive serine/threonine-protein kinase ZRK12 (389 aa).

The region spanning 41-342 is the Protein kinase domain; it reads SADEIRKATN…ETQFDSHQDI (302 aa). ATP is bound by residues 47-55 and Lys-84; that span reads KATNNFGVS. A Phosphotyrosine modification is found at Tyr-129. Thr-214 carries the post-translational modification Phosphothreonine. Tyr-222 carries the phosphotyrosine modification.

The protein belongs to the protein kinase superfamily. Ser/Thr protein kinase family.

Its function is as follows. Together with RPP13L4/ZAR1, involved in the regulation of the ambient temperature-sensitive intersection of growth and immune response in the absence of pathogens. The chain is Inactive serine/threonine-protein kinase ZRK12 from Arabidopsis thaliana (Mouse-ear cress).